The sequence spans 391 residues: NADH-quinone oxidoreductase subunit D (391 aa).

The protein belongs to the complex I 49 kDa subunit family. In terms of assembly, NDH-1 is composed of 14 different subunits. Subunits NuoB, C, D, E, F, and G constitute the peripheral sector of the complex.

The protein localises to the cell inner membrane. The catalysed reaction is a quinone + NADH + 5 H(+)(in) = a quinol + NAD(+) + 4 H(+)(out). Functionally, NDH-1 shuttles electrons from NADH, via FMN and iron-sulfur (Fe-S) centers, to quinones in the respiratory chain. The immediate electron acceptor for the enzyme in this species is believed to be ubiquinone. Couples the redox reaction to proton translocation (for every two electrons transferred, four hydrogen ions are translocated across the cytoplasmic membrane), and thus conserves the redox energy in a proton gradient. The protein is NADH-quinone oxidoreductase subunit D of Rickettsia rickettsii (strain Sheila Smith).